The following is a 297-amino-acid chain: Vacuolar protein sorting-associated protein 26 (297 aa).

The protein belongs to the VPS26 family. In terms of assembly, component of the retromer complex, composed of VPS26, VPS29 and VPS35. As part of the retromer complex, interacts with the sorting receptor SORTLR/sortilin. Interacts with GTPase RAB7.

Its function is as follows. Plays a role in vesicular protein sorting. Component of the membrane-associated retromer complex which is essential in endosome-to-Golgi retrograde transport. In Plasmodium falciparum (isolate 3D7), this protein is Vacuolar protein sorting-associated protein 26.